A 1081-amino-acid chain; its full sequence is WD repeat-containing protein 64 (1081 aa).

14 WD repeats span residues 102 to 152 (DPIA…ATQK), 153 to 198 (GLIT…GSSQ), 199 to 265 (ENYF…VLDS), 266 to 314 (KNFK…LEDN), 315 to 356 (LPVR…NIST), 357 to 400 (KPVG…TLSL), 401 to 444 (LQVF…TRMI), 445 to 488 (QDTK…ETGL), 489 to 532 (QVYQ…FGSG), 533 to 631 (QEMK…LIVE), 632 to 740 (RNFS…PQSS), 741 to 803 (KGSK…EGRL), 804 to 857 (LKDM…EKKF), and 858 to 895 (KQLL…RLWH). Low complexity predominate over residues 726 to 745 (CSSSQCESSKGPQSSKGSKQ). Positions 726 to 757 (CSSSQCESSKGPQSSKGSKQSIHDSEVKGEQT) are disordered. Basic and acidic residues predominate over residues 746–756 (SIHDSEVKGEQ). The tract at residues 1036–1060 (DSSDGITGKKKGGHVQREKAPRRRS) is disordered. The segment covering 1043–1060 (GKKKGGHVQREKAPRRRS) has biased composition (basic residues).

The chain is WD repeat-containing protein 64 (WDR64) from Homo sapiens (Human).